Here is a 307-residue protein sequence, read N- to C-terminus: D-alanine--D-alanine ligase (307 aa).

The ATP-grasp domain maps to 101–301 (KTVMRAAGVS…FGELVRWMVE (201 aa)). Residue 127–182 (PLTPPYVVKPIAEGSSMGVIIVRDERSHPPQILASDEWVYGEEVLAETYVAGRELT) participates in ATP binding. 3 residues coordinate Mg(2+): Asp-251, Glu-268, and Asn-270.

It belongs to the D-alanine--D-alanine ligase family. Requires Mg(2+) as cofactor. Mn(2+) serves as cofactor.

It localises to the cytoplasm. It carries out the reaction 2 D-alanine + ATP = D-alanyl-D-alanine + ADP + phosphate + H(+). It participates in cell wall biogenesis; peptidoglycan biosynthesis. Its function is as follows. Cell wall formation. In Methylorubrum extorquens (strain CM4 / NCIMB 13688) (Methylobacterium extorquens), this protein is D-alanine--D-alanine ligase.